Here is a 704-residue protein sequence, read N- to C-terminus: Tetratricopeptide repeat protein 12 (704 aa).

Residue threonine 71 is modified to Phosphothreonine. TPR repeat units lie at residues 105–138 (ADAL…LKDM), 139–172 (KVLY…DENC), and 173–206 (TKAY…NPKL).

It is found in the cytoplasm. Functionally, cytoplasmic protein that plays a role in the proper assembly of dynein arm complexes in motile cilia in both respiratory cells and sperm flagella. The sequence is that of Tetratricopeptide repeat protein 12 (Ttc12) from Mus musculus (Mouse).